The primary structure comprises 270 residues: Glutamate racemase (270 aa).

Residues 15 to 16 (DS) and 47 to 48 (YG) each bind substrate. The active-site Proton donor/acceptor is Cys-78. A substrate-binding site is contributed by 79 to 80 (NT). Cys-189 (proton donor/acceptor) is an active-site residue. Residue 190–191 (TH) coordinates substrate.

It belongs to the aspartate/glutamate racemases family.

The catalysed reaction is L-glutamate = D-glutamate. The protein operates within cell wall biogenesis; peptidoglycan biosynthesis. Provides the (R)-glutamate required for cell wall biosynthesis. The sequence is that of Glutamate racemase from Syntrophus aciditrophicus (strain SB).